A 274-amino-acid chain; its full sequence is Undecaprenyl-diphosphatase (274 aa).

A run of 8 helical transmembrane segments spans residues 1–21, 48–68, 84–104, 108–128, 143–163, 187–207, 214–234, and 254–274; these read MDWF…FLPI, VVIQ…DFAG, LGVI…GDVI, LFRP…MWVI, IGLG…LWPG, FSFY…FIKS, IGLL…YLAI, and VIFG…NGGL.

Belongs to the UppP family.

The protein resides in the cell membrane. The catalysed reaction is di-trans,octa-cis-undecaprenyl diphosphate + H2O = di-trans,octa-cis-undecaprenyl phosphate + phosphate + H(+). Catalyzes the dephosphorylation of undecaprenyl diphosphate (UPP). Confers resistance to bacitracin. The chain is Undecaprenyl-diphosphatase from Deinococcus geothermalis (strain DSM 11300 / CIP 105573 / AG-3a).